A 346-amino-acid polypeptide reads, in one-letter code: [LysW]-lysine/[LysW]-ornithine hydrolase (346 aa).

His-68 provides a ligand contact to Zn(2+). Residue Asp-70 is part of the active site. Residue Asp-92 coordinates Zn(2+). Glu-122 (proton acceptor) is an active-site residue. 3 residues coordinate Zn(2+): Glu-123, Glu-146, and His-317.

Belongs to the peptidase M20A family. LysK subfamily. Zn(2+) is required as a cofactor. Requires Co(2+) as cofactor.

It localises to the cytoplasm. The catalysed reaction is [amino-group carrier protein]-C-terminal-gamma-(L-lysyl)-L-glutamate + H2O = [amino-group carrier protein]-C-terminal-L-glutamate + L-lysine. The enzyme catalyses [amino-group carrier protein]-C-terminal-gamma-(L-ornithyl)-L-glutamate + H2O = [amino-group carrier protein]-C-terminal-L-glutamate + L-ornithine. The protein operates within amino-acid biosynthesis; L-lysine biosynthesis via AAA pathway; L-lysine from L-alpha-aminoadipate (Thermus route): step 5/5. Its pathway is amino-acid biosynthesis; L-arginine biosynthesis. Functionally, catalyzes the release of L-lysine from [LysW]-gamma-L-lysine and the release of L-ornithine from [LysW]-L-ornithine. In Saccharolobus islandicus (strain Y.N.15.51 / Yellowstone #2) (Sulfolobus islandicus), this protein is [LysW]-lysine/[LysW]-ornithine hydrolase.